Consider the following 340-residue polypeptide: tRNA N6-adenosine threonylcarbamoyltransferase (340 aa).

Fe cation is bound by residues His115 and His119. Substrate contacts are provided by residues 138–142 (VVSGG), Asp171, Gly184, Asp188, and Asn278. Residue Asp306 coordinates Fe cation.

Belongs to the KAE1 / TsaD family. Fe(2+) is required as a cofactor.

Its subcellular location is the cytoplasm. The catalysed reaction is L-threonylcarbamoyladenylate + adenosine(37) in tRNA = N(6)-L-threonylcarbamoyladenosine(37) in tRNA + AMP + H(+). Functionally, required for the formation of a threonylcarbamoyl group on adenosine at position 37 (t(6)A37) in tRNAs that read codons beginning with adenine. Is involved in the transfer of the threonylcarbamoyl moiety of threonylcarbamoyl-AMP (TC-AMP) to the N6 group of A37, together with TsaE and TsaB. TsaD likely plays a direct catalytic role in this reaction. In Clostridium botulinum (strain Kyoto / Type A2), this protein is tRNA N6-adenosine threonylcarbamoyltransferase.